A 254-amino-acid chain; its full sequence is Peroxisomal membrane protein 11-2 (254 aa).

The Cytoplasmic portion of the chain corresponds to methionine 1–leucine 113. The helical transmembrane segment at leucine 114–leucine 134 threads the bilayer. At alanine 135–glycine 227 the chain is on the lumenal side. A helical transmembrane segment spans residues leucine 228–valine 247. Topologically, residues histidine 248 to cysteine 254 are cytoplasmic.

The protein belongs to the peroxin-11 family.

It localises to the peroxisome membrane. Functionally, involved in peroxisomal proliferation. The protein is Peroxisomal membrane protein 11-2 (PEX11-2) of Oryza sativa subsp. japonica (Rice).